We begin with the raw amino-acid sequence, 346 residues long: Isopentenyl-diphosphate delta-isomerase (346 aa).

Substrate is bound at residue 9–10; the sequence is RK. FMN contacts are provided by residues serine 67, 68 to 70, serine 98, and asparagine 127; that span reads SMT. 98-100 lines the substrate pocket; the sequence is SQR. Glutamine 162 is a substrate binding site. A Mg(2+)-binding site is contributed by glutamate 163. FMN contacts are provided by residues lysine 194, threonine 224, 274 to 276, and 295 to 296; these read GIR and AA.

Belongs to the IPP isomerase type 2 family. As to quaternary structure, homooctamer. Dimer of tetramers. It depends on FMN as a cofactor. NADPH serves as cofactor. Mg(2+) is required as a cofactor.

The protein resides in the cytoplasm. The catalysed reaction is isopentenyl diphosphate = dimethylallyl diphosphate. Its function is as follows. Involved in the biosynthesis of isoprenoids. Catalyzes the 1,3-allylic rearrangement of the homoallylic substrate isopentenyl (IPP) to its allylic isomer, dimethylallyl diphosphate (DMAPP). This is Isopentenyl-diphosphate delta-isomerase from Stutzerimonas stutzeri (strain A1501) (Pseudomonas stutzeri).